A 305-amino-acid polypeptide reads, in one-letter code: MTTLSSITVSVPATTANLGPGFDCLGAAISLYNRFKFSIADSAIEVKITVTGKEAPKVSTDRNNLAYQAFVKLYEYINQTPPCVLVEIDLGVPLARGLGSSATAIVGGLLGANQLAGSPLSQTEVMNLAIAIEGHPDNVVPALLGGCRLTASTSKGWVVCDIPWHPDIVPVVAIPDFELSTTEARRVIPTEYIRSDAIFNCAHLGILLRGLETGYGEWLQAGMQDKIHQPYRKSLIKGYEYVRSAALNAGAYEMVISGAGPTLLALTNSLTSSKVIAAMTGAWENQGVVTQVQALEINTRGAVFS.

93 to 103 (PLARGLGSSAT) provides a ligand contact to ATP.

The protein belongs to the GHMP kinase family. Homoserine kinase subfamily.

The protein localises to the cytoplasm. The catalysed reaction is L-homoserine + ATP = O-phospho-L-homoserine + ADP + H(+). It functions in the pathway amino-acid biosynthesis; L-threonine biosynthesis; L-threonine from L-aspartate: step 4/5. Functionally, catalyzes the ATP-dependent phosphorylation of L-homoserine to L-homoserine phosphate. The sequence is that of Homoserine kinase from Trichodesmium erythraeum (strain IMS101).